We begin with the raw amino-acid sequence, 90 residues long: Small ribosomal subunit protein bS20 (90 aa).

Positions 1–21 (MANHKSALKRVRQTKKRTERN) are disordered.

The protein belongs to the bacterial ribosomal protein bS20 family.

Its function is as follows. Binds directly to 16S ribosomal RNA. This chain is Small ribosomal subunit protein bS20, found in Nitratiruptor sp. (strain SB155-2).